The primary structure comprises 629 residues: Methyl-accepting chemotaxis protein PscA (629 aa).

Topologically, residues 1 to 9 (MKNLGFSKK) are cytoplasmic. A helical transmembrane segment spans residues 10-30 (ILLAAALIVVVAFSVFIVIND). The Periplasmic segment spans residues 31-276 (YRQRQSLKSS…AYAMLTEFRT (246 aa)). The 223-residue stretch at 36 to 258 (SLKSSVKSEL…QGVATANWYV (223 aa)) folds into the Cache domain. The helical transmembrane segment at 277–297 (SAITAMVVVVMVIILLLGPLI) threads the bilayer. Positions 298–352 (RVLMQPLHQMGRAMRDIADGEGDLTKRLAITSHDEFGALAESFNHFVERIHTSIR) constitute an HAMP domain. Residues 298 to 629 (RVLMQPLHQM…LQQLVGSFRI (332 aa)) are Cytoplasmic-facing. Residues 357–593 (TAAQLGEVAT…SINVDITHIN (237 aa)) form the Methyl-accepting transducer domain.

This sequence belongs to the methyl-accepting chemotaxis (MCP) protein family.

It localises to the cell inner membrane. In terms of biological role, chemotactic-signal transducers respond to changes in the concentration of attractants and repellents in the environment, transduce a signal from the outside to the inside of the cell, and facilitate sensory adaptation through the variation of the level of methylation. PscA recognizes specifically and with high affinity L-Asp, D-Asp and L-Glu. It exerts a double function, in mediating chemotaxis to these amino acids and in modulating cyclic di-GMP (c-di-GMP) levels, causing alterations in biofilm development. Plays a key role in the infection process. It may facilitate bacterial entry into the plant. This chain is Methyl-accepting chemotaxis protein PscA, found in Pseudomonas syringae pv. tomato (strain ATCC BAA-871 / DC3000).